The sequence spans 295 residues: Nucleotide-binding protein LACR_1047 (295 aa).

12 to 19 lines the ATP pocket; the sequence is GMSGAGKT. 63–66 contacts GTP; that stretch reads DMRS.

Belongs to the RapZ-like family.

Displays ATPase and GTPase activities. The sequence is that of Nucleotide-binding protein LACR_1047 from Lactococcus lactis subsp. cremoris (strain SK11).